Reading from the N-terminus, the 354-residue chain is Lipoyl synthase, mitochondrial (354 aa).

Positions 91, 96, 102, 122, 126, 129, and 337 each coordinate [4Fe-4S] cluster. Positions 107 to 326 (DDSLATATIM…AEYSKKLGFL (220 aa)) constitute a Radical SAM core domain.

The protein belongs to the radical SAM superfamily. Lipoyl synthase family. Requires [4Fe-4S] cluster as cofactor.

Its subcellular location is the mitochondrion. It carries out the reaction [[Fe-S] cluster scaffold protein carrying a second [4Fe-4S](2+) cluster] + N(6)-octanoyl-L-lysyl-[protein] + 2 oxidized [2Fe-2S]-[ferredoxin] + 2 S-adenosyl-L-methionine + 4 H(+) = [[Fe-S] cluster scaffold protein] + N(6)-[(R)-dihydrolipoyl]-L-lysyl-[protein] + 4 Fe(3+) + 2 hydrogen sulfide + 2 5'-deoxyadenosine + 2 L-methionine + 2 reduced [2Fe-2S]-[ferredoxin]. The protein operates within protein modification; protein lipoylation via endogenous pathway; protein N(6)-(lipoyl)lysine from octanoyl-[acyl-carrier-protein]: step 2/2. Functionally, catalyzes the radical-mediated insertion of two sulfur atoms into the C-6 and C-8 positions of the octanoyl moiety bound to the lipoyl domains of lipoate-dependent enzymes, thereby converting the octanoylated domains into lipoylated derivatives. This chain is Lipoyl synthase, mitochondrial, found in Caenorhabditis elegans.